A 172-amino-acid chain; its full sequence is Acidic proline-rich protein PRP25 (172 aa).

An N-terminal signal peptide occupies residues 1 to 16 (MLVVLFTAVLLTLSYA). Residues 22-172 (ELQILDQTPN…QQGPPPPGGP (151 aa)) are disordered. Positions 32-44 (QKPPPPGFPPRPP) are enriched in pro residues. Residues 57–67 (GPQQSPLQPGK) are compositionally biased toward low complexity. Composition is skewed to pro residues over residues 68–137 (PQDP…PQQK) and 145–172 (QGPP…PGGP).

Its subcellular location is the secreted. The protein is Acidic proline-rich protein PRP25 of Rattus norvegicus (Rat).